A 738-amino-acid chain; its full sequence is Squalene hopane cyclase afumA (738 aa).

2 PFTB repeats span residues 132-173 and 321-361; these read GSQY…RIIG and RRRC…KLHD. The Proton donor role is filled by aspartate 460. PFTB repeat units follow at residues 482-523, 581-621, and 634-675; these read VRDA…ESLC, CARA…QYFK, and AARA…SQTA.

It belongs to the terpene cyclase/mutase family.

It participates in secondary metabolite biosynthesis. Functionally, squalene hopane cyclase; part of the gene cluster that mediates the biosynthesis fumihopaside A, a hopane-type glucoside that enhances the thermotolerance and UV resistance of N.fumigata. The first step of fumihopaside A biosynthesis is performed by the squalene hopane cyclase afumA that catalyzes the cyclization of 3S-oxidosqualene into the hopene 21-beta-H-hopane-3-beta,22-diol. The cytochrome P450 monooxygenase afumB is responsible for both hydroxylation at C-24 and oxidations at C-30 of the afumA product. The glycosyltransferase afumC then catalyzes the glycosylation at C-24, using UDP-D-glucose as a donor, to produce fumihopaside A. AfumC is also able to accept UDP-D-galactose and UDP-D-glucuronic acid as donors to yield minor derivatives. Fumihopaside B, another minor derivative produced, is different from fumihopaside A due to the presence of a double bond between C-22 and C-29. This chain is Squalene hopane cyclase afumA, found in Aspergillus fumigatus (strain CBS 144.89 / FGSC A1163 / CEA10) (Neosartorya fumigata).